The primary structure comprises 217 residues: Adenylate kinase (217 aa).

Residue 10 to 15 (GAGKGT) coordinates ATP. Residues 30–59 (STGDMFRAAMKEETQLGLEAKSFIDKGELV) form an NMP region. Residues Thr-31, Arg-36, 57 to 59 (ELV), 85 to 88 (GFPR), and Gln-92 contribute to the AMP site. The LID stretch occupies residues 126-163 (GRRICKNCGATYHLVFNPPAKENVCDKCGGELYQRADD). ATP is bound at residue Arg-127. Residues Cys-130 and Cys-133 each coordinate Zn(2+). Position 136–137 (136–137 (TY)) interacts with ATP. The Zn(2+) site is built by Cys-150 and Cys-153. 2 residues coordinate AMP: Arg-160 and Arg-171. Lys-199 is a binding site for ATP.

The protein belongs to the adenylate kinase family. Monomer.

It localises to the cytoplasm. It carries out the reaction AMP + ATP = 2 ADP. It functions in the pathway purine metabolism; AMP biosynthesis via salvage pathway; AMP from ADP: step 1/1. Functionally, catalyzes the reversible transfer of the terminal phosphate group between ATP and AMP. Plays an important role in cellular energy homeostasis and in adenine nucleotide metabolism. The chain is Adenylate kinase from Bacillus pumilus (strain SAFR-032).